An 891-amino-acid polypeptide reads, in one-letter code: von Willebrand factor A domain-containing protein 7 (891 aa).

The N-terminal stretch at 1-28 (MLPTEVPQSHPGPSALLLLQLLLPPTSA) is a signal peptide. N-linked (GlcNAc...) asparagine glycosylation is present at Asn55. Residues 237–272 (PKPPGKCSHGGHFDRSSSQPPRGGINKDSTSPGFSP) form a disordered region. A VWFA domain is found at 313–506 (ASSLSFVLDT…SMAALVTLPL (194 aa)).

Expressed at low level in different cell lines.

The protein resides in the secreted. This is von Willebrand factor A domain-containing protein 7 (VWA7) from Homo sapiens (Human).